A 418-amino-acid chain; its full sequence is MGILQDLEFRGLINQQTDDEGFEQLLEKESVKLYCGFDPTADSLHIGHMYPVLMLRRFQLAGHQPIALVGGGTGMIGDPSGKKAERTLNTKDTVAYYTESIKNQLSNFLEFENVDNPATMANNYDWLGNLDVISFLRDIGKNFGLNYMLAKDTVASRLETGISFTEFSYMILQSYDFLNLYQHHKCRLQIGGSDQWGNITAGLELIRKSEEDAKAFGLTIPLVTKSDGTKFGKTEGGAIWLDPEKTTPYEFYQFWINTDDRDVVKYLKYFTFLSHEEILELEKQVAEAPEKRAAQKALGSEMTKLVHGEEALEQAIKISAALFSGSVAELTASEIEQGFKDVPSVERTAEDTVLIDLLVESKISPSKRQAREDVTNGAIYVNGERTQALDYVVTENDRIEGKFTIIRRGKKKYFLIRY.

Tyrosine 34 contacts L-tyrosine. The 'HIGH' region motif lies at 39–48 (PTADSLHIGH). Residues tyrosine 169 and glutamine 173 each contribute to the L-tyrosine site. Residues 230–234 (KFGKT) carry the 'KMSKS' region motif. Lysine 233 provides a ligand contact to ATP. The 67-residue stretch at 352-418 (TVLIDLLVES…GKKKYFLIRY (67 aa)) folds into the S4 RNA-binding domain.

Belongs to the class-I aminoacyl-tRNA synthetase family. TyrS type 1 subfamily. In terms of assembly, homodimer.

The protein localises to the cytoplasm. It catalyses the reaction tRNA(Tyr) + L-tyrosine + ATP = L-tyrosyl-tRNA(Tyr) + AMP + diphosphate + H(+). In terms of biological role, catalyzes the attachment of tyrosine to tRNA(Tyr) in a two-step reaction: tyrosine is first activated by ATP to form Tyr-AMP and then transferred to the acceptor end of tRNA(Tyr). In Bacillus cereus (strain ATCC 14579 / DSM 31 / CCUG 7414 / JCM 2152 / NBRC 15305 / NCIMB 9373 / NCTC 2599 / NRRL B-3711), this protein is Tyrosine--tRNA ligase 1.